Consider the following 117-residue polypeptide: NADH-ubiquinone oxidoreductase chain 3 (117 aa).

The next 3 helical transmembrane spans lie at 4–24 (IILI…LASI), 60–80 (ITII…MIII), and 86–106 (IMIW…GLYH).

Belongs to the complex I subunit 3 family.

The protein localises to the mitochondrion membrane. It carries out the reaction a ubiquinone + NADH + 5 H(+)(in) = a ubiquinol + NAD(+) + 4 H(+)(out). Functionally, core subunit of the mitochondrial membrane respiratory chain NADH dehydrogenase (Complex I) that is believed to belong to the minimal assembly required for catalysis. Complex I functions in the transfer of electrons from NADH to the respiratory chain. The immediate electron acceptor for the enzyme is believed to be ubiquinone. This is NADH-ubiquinone oxidoreductase chain 3 (mt:ND3) from Drosophila subobscura (Fruit fly).